The sequence spans 216 residues: MRVILLGPPGAGKGTQAKLISEKFSIPHISTGDIFRANIKEKTPLGIEAKRYIDNGQLVPDEVTIGIVKDRLTKDDCDNGFLLDGFPRTVAQAEALDEFLKGINKELDVALLIKVPEEFILERMTGRRVCTSCGASYHIRFNPPKIEGKCDICDNELIQRKDDTEATVKERLEVYSKQTYPLINYYKDNGIISEVNGTESIDEVFGNISNILGRDK.

ATP is bound at residue 10 to 15 (GAGKGT). An NMP region spans residues 30–59 (STGDIFRANIKEKTPLGIEAKRYIDNGQLV). AMP is bound by residues T31, R36, 57-59 (QLV), 85-88 (GFPR), and Q92. An LID region spans residues 126-163 (GRRVCTSCGASYHIRFNPPKIEGKCDICDNELIQRKDD). R127 serves as a coordination point for ATP. 2 residues coordinate Zn(2+): C130 and C133. 136 to 137 (SY) is a binding site for ATP. Zn(2+)-binding residues include C150 and C153. AMP contacts are provided by R160 and R171. Residue E199 coordinates ATP.

The protein belongs to the adenylate kinase family. In terms of assembly, monomer.

The protein localises to the cytoplasm. The catalysed reaction is AMP + ATP = 2 ADP. It functions in the pathway purine metabolism; AMP biosynthesis via salvage pathway; AMP from ADP: step 1/1. Its function is as follows. Catalyzes the reversible transfer of the terminal phosphate group between ATP and AMP. Plays an important role in cellular energy homeostasis and in adenine nucleotide metabolism. This chain is Adenylate kinase, found in Clostridium botulinum (strain 657 / Type Ba4).